The following is a 1189-amino-acid chain: Pumilio homolog 1 (1189 aa).

Disordered regions lie at residues Q24 to V65, S233 to I288, Q491 to T525, A614 to L652, and G743 to N774. Residues Q45 to A58 are compositionally biased toward low complexity. The segment covering N250–D277 has biased composition (basic and acidic residues). A compositionally biased stretch (low complexity) spans Q491–Q503. Over residues R512–T525 the composition is skewed to polar residues. Composition is skewed to low complexity over residues Q627–L652 and L764–N774. Residues G829–Y1171 enclose the PUM-HD domain. Pumilio repeat units follow at residues E849–N884, E885–E920, R921–R958, E959–D994, A995–E1030, E1031–A1066, E1067–D1102, and T1106–H1145. Residues S864–Q868 are adenine-nucleotide binding in RNA target. The interval N900–Q904 is uracil-nucleotide binding in RNA target. Positions C936 to Q940 are adenine-nucleotide binding in RNA target. The tract at residues N974–Q978 is non-specific-nucleotide binding in RNA target. Residues C1010–Q1014 are adenine-nucleotide binding in RNA target. The uracil-nucleotide binding in RNA target stretch occupies residues N1046–Q1050. 2 guanine-nucleotide binding in RNA target regions span residues S1082–E1086 and N1083–E1086. Residues N1125–Q1129 are uracil-nucleotide binding in RNA target.

In terms of tissue distribution, detected in embryonic male and female gonads, heart, liver and muscle. Detected in adult brain, testis, ovary, heart, lung, spleen, kidney and muscle.

It localises to the cytoplasm. The protein localises to the P-body. It is found in the cytoplasmic granule. Sequence-specific RNA-binding protein that acts as a post-transcriptional repressor by binding the 3'-UTR of mRNA targets. Binds to an RNA consensus sequence, the Pumilio Response Element (PRE), 5'-UGUANAUA-3', that is related to the Nanos Response Element (NRE). Mediates post-transcriptional repression of transcripts via different mechanisms: acts via direct recruitment of the CCR4-POP2-NOT deadenylase leading to translational inhibition and mRNA degradation. Also mediates deadenylation-independent repression by promoting accessibility of miRNAs. The sequence is that of Pumilio homolog 1 (PUM1) from Gallus gallus (Chicken).